The following is a 236-amino-acid chain: Orotidine 5'-phosphate decarboxylase (236 aa).

Substrate is bound by residues aspartate 14, lysine 36, 63–72, threonine 122, arginine 183, glutamine 192, glycine 212, and arginine 213; that span reads DLKYHDIPNT. The Proton donor role is filled by lysine 65.

This sequence belongs to the OMP decarboxylase family. Type 1 subfamily. Homodimer.

The enzyme catalyses orotidine 5'-phosphate + H(+) = UMP + CO2. Its pathway is pyrimidine metabolism; UMP biosynthesis via de novo pathway; UMP from orotate: step 2/2. Functionally, catalyzes the decarboxylation of orotidine 5'-monophosphate (OMP) to uridine 5'-monophosphate (UMP). The polypeptide is Orotidine 5'-phosphate decarboxylase (Halorhodospira halophila (strain DSM 244 / SL1) (Ectothiorhodospira halophila (strain DSM 244 / SL1))).